Reading from the N-terminus, the 294-residue chain is Putative glutamine amidotransferase HI_1037 (294 aa).

C18 is an active-site residue. One can recognise a Glutamine amidotransferase type-2 domain in the interval 18–266 (CQLLGMNCNT…NGGFVFFKNG (249 aa)).

In Haemophilus influenzae (strain ATCC 51907 / DSM 11121 / KW20 / Rd), this protein is Putative glutamine amidotransferase HI_1037.